The chain runs to 1205 residues: Nitric oxide synthase 3 (1205 aa).

The segment at 1–73 (MGNLKSVGQE…PPEGPKFPRV (73 aa)) is disordered. Residue Gly2 is the site of N-myristoyl glycine attachment. S-palmitoyl cysteine attachment occurs at residues Cys15 and Cys26. Over residues 15–27 (CGLGLGLGLGLCG) the composition is skewed to gly residues. A compositionally biased stretch (pro residues) spans 33-47 (SPAPEPSRAPAPATP). Zn(2+) is bound by residues Cys96 and Cys101. An interaction with NOSIP region spans residues 100-488 (CCLGSLVLPR…PDPWKGSATK (389 aa)). Ser104 lines the (6R)-L-erythro-5,6,7,8-tetrahydrobiopterin pocket. Ser116 carries the post-translational modification Phosphoserine; by CDK5. Residue Cys186 coordinates heme b. L-arginine-binding residues include Gln249, Trp358, Tyr359, Glu363, and Asn368. Positions 448, 449, and 462 each coordinate (6R)-L-erythro-5,6,7,8-tetrahydrobiopterin. Tyr477 provides a ligand contact to heme b. The interval 492-512 (ITRKKTFKEVANAVKISASLM) is calmodulin-binding. Thr497 bears the Phosphothreonine; by AMPK and PKA mark. Residues 522 to 705 (ATILYASETG…AFRGWAKAAF (184 aa)) enclose the Flavodoxin-like domain. FMN-binding residues include Ser528, Glu529, Thr530, Arg532, Ser574, and Thr575. Phosphoserine is present on residues Ser617, Ser635, and Ser640. The FMN site is built by Ser656, Cys663, Glu689, and Gln693. Residues 758-1004 (RKMFQATVLS…IRGAPSFRLP (247 aa)) form the FAD-binding FR-type domain. Arg778 contacts NADP(+). His800 contacts FAD. A disordered region spans residues 820 to 847 (EDPPPPTESVAVEQLEKGSPGGPPPSWV). Ser838 carries the post-translational modification Phosphoserine. Residues Arg940, Tyr942, Ser943, Thr958, Ala960, Tyr964, Val977, Cys978, and Ser979 each coordinate FAD. Residues Thr1018, Arg1051, Ser1080, Arg1081, Lys1087, Tyr1089, and Gln1091 each coordinate NADP(+). At Thr1177 the chain carries Phosphothreonine. Position 1179 is a phosphoserine; by AMPK, PDPK1 and PKA (Ser1179). Ser1181 carries the post-translational modification Phosphoserine.

It belongs to the NOS family. As to quaternary structure, homodimer. Interacts with NOSIP and NOSTRIN. Interacts with HSP90AB1. Forms a complex with ASL, ASS1 and SLC7A1; the complex regulates cell-autonomous L-arginine synthesis and citrulline recycling while channeling extracellular L-arginine to nitric oxide synthesis pathway. Heme b is required as a cofactor. The cofactor is FAD. FMN serves as cofactor. It depends on (6R)-L-erythro-5,6,7,8-tetrahydrobiopterin as a cofactor. Phosphorylation by AMPK at Ser-1179 in the presence of Ca(2+)-calmodulin (CaM) activates activity. In absence of Ca(2+)-calmodulin, AMPK also phosphorylates Thr-497, resulting in inhibition of activity. Phosphorylation of Ser-116 by CDK5 reduces activity.

It is found in the cell membrane. The protein localises to the membrane. The protein resides in the caveola. It localises to the cytoplasm. Its subcellular location is the cytoskeleton. It is found in the golgi apparatus. The catalysed reaction is 2 L-arginine + 3 NADPH + 4 O2 + H(+) = 2 L-citrulline + 2 nitric oxide + 3 NADP(+) + 4 H2O. With respect to regulation, stimulated by calcium/calmodulin. Inhibited by NOSIP and NOSTRIN. Functionally, produces nitric oxide (NO) which is implicated in vascular smooth muscle relaxation through a cGMP-mediated signal transduction pathway. NO mediates vascular endothelial growth factor (VEGF)-induced angiogenesis in coronary vessels and promotes blood clotting through the activation of platelets. The protein is Nitric oxide synthase 3 (NOS3) of Bos taurus (Bovine).